Consider the following 100-residue polypeptide: Large ribosomal subunit protein bL28 (100 aa).

It belongs to the bacterial ribosomal protein bL28 family.

The chain is Large ribosomal subunit protein bL28 from Ehrlichia ruminantium (strain Gardel).